The chain runs to 561 residues: Thymidine kinase (561 aa).

2 stretches are compositionally biased toward polar residues: residues 1–14 (MASNSHNNYNTPRR) and 112–122 (LSSSNTASGLR). Disordered regions lie at residues 1-22 (MASNSHNNYNTPRRQNYDVPKA) and 34-122 (FLTQ…SGLR). ATP is bound at residue 245–252 (GCMAAGKT). Glu-272 serves as the catalytic Proton acceptor. Position 310 (Gln-310) interacts with substrate. Arg-400 contributes to the ATP binding site. Arg-406 provides a ligand contact to substrate.

Belongs to the herpesviridae thymidine kinase family. As to quaternary structure, homodimer.

The catalysed reaction is thymidine + ATP = dTMP + ADP + H(+). Its function is as follows. Catalyzes the transfer of the gamma-phospho group of ATP to thymidine to generate dTMP in the salvage pathway of pyrimidine synthesis. The dTMP serves as a substrate for DNA polymerase during viral DNA replication. Allows the virus to be reactivated and to grow in non-proliferative cells lacking a high concentration of phosphorylated nucleic acid precursors. The sequence is that of Thymidine kinase from Connochaetes taurinus (Blue wildebeest).